The sequence spans 80 residues: Large ribosomal subunit protein uL24 (80 aa).

The disordered stretch occupies residues 53-80 (HMRPTQGQTQGSIIEREFPIHSSNVKKS).

Belongs to the universal ribosomal protein uL24 family. In terms of assembly, part of the 50S ribosomal subunit.

Functionally, one of two assembly initiator proteins, it binds directly to the 5'-end of the 23S rRNA, where it nucleates assembly of the 50S subunit. In terms of biological role, one of the proteins that surrounds the polypeptide exit tunnel on the outside of the subunit. This Pelodictyon phaeoclathratiforme (strain DSM 5477 / BU-1) protein is Large ribosomal subunit protein uL24.